The chain runs to 347 residues: NADH-ubiquinone oxidoreductase chain 2 (347 aa).

The next 11 helical transmembrane spans lie at 1–21 (MNPL…MIVM), 25–45 (HWLT…PILM), 59–79 (YFLT…INLL), 96–116 (IIMT…FWVP), 122–142 (IQLS…MSIL), 145–165 (IFPT…VAIG), 178–198 (IMAY…AYNP), 201–221 (TLLN…MFML), 237–257 (APLL…LPPL), 276–296 (IITP…YMRL), and 326–346 (VSPL…LMLL).

It belongs to the complex I subunit 2 family. In terms of assembly, core subunit of respiratory chain NADH dehydrogenase (Complex I) which is composed of 45 different subunits. Interacts with TMEM242.

Its subcellular location is the mitochondrion inner membrane. The catalysed reaction is a ubiquinone + NADH + 5 H(+)(in) = a ubiquinol + NAD(+) + 4 H(+)(out). Its function is as follows. Core subunit of the mitochondrial membrane respiratory chain NADH dehydrogenase (Complex I) which catalyzes electron transfer from NADH through the respiratory chain, using ubiquinone as an electron acceptor. Essential for the catalytic activity and assembly of complex I. This Boneia bidens (Manado fruit bat) protein is NADH-ubiquinone oxidoreductase chain 2.